A 194-amino-acid chain; its full sequence is CASP-like protein 2D1 (194 aa).

A compositionally biased stretch (basic and acidic residues) spans 1 to 16 (MRDNNNNNTREEERSS). The interval 1-26 (MRDNNNNNTREEERSSSSKQQQPQAP) is disordered. Residues 1–30 (MRDNNNNNTREEERSSSSKQQQPQAPMSLK) are Cytoplasmic-facing. A helical transmembrane segment spans residues 31 to 51 (IIDSCLRLSVVPLSVATIWLT). Residues 52–74 (VTNHESNPDYGNLEYNSIMGLKY) are Extracellular-facing. The chain crosses the membrane as a helical span at residues 75–95 (MVGVSAISAIYALLSTVSSWV). Residues 96-110 (TCLVSKAWLFFIPDQ) lie on the Cytoplasmic side of the membrane. A helical membrane pass occupies residues 111-133 (VLAYVMTTSVAGATEIVYLLNKG). Residues 134 to 152 (DKIVTWSEMCSSYPHYCSK) are Extracellular-facing. Residues 153 to 173 (LTIALGLHVFVLFFFLFLSVI) form a helical membrane-spanning segment. Over 174-194 (SAYRAFSPFDPPCDSQTNNDA) the chain is Cytoplasmic.

The protein belongs to the Casparian strip membrane proteins (CASP) family. As to quaternary structure, homodimer and heterodimers.

Its subcellular location is the cell membrane. The chain is CASP-like protein 2D1 from Arabidopsis thaliana (Mouse-ear cress).